We begin with the raw amino-acid sequence, 125 residues long: Ribonuclease P protein component (125 aa).

The protein belongs to the RnpA family. As to quaternary structure, consists of a catalytic RNA component (M1 or rnpB) and a protein subunit.

It carries out the reaction Endonucleolytic cleavage of RNA, removing 5'-extranucleotides from tRNA precursor.. RNaseP catalyzes the removal of the 5'-leader sequence from pre-tRNA to produce the mature 5'-terminus. It can also cleave other RNA substrates such as 4.5S RNA. The protein component plays an auxiliary but essential role in vivo by binding to the 5'-leader sequence and broadening the substrate specificity of the ribozyme. This Rhodococcus opacus (strain B4) protein is Ribonuclease P protein component.